We begin with the raw amino-acid sequence, 225 residues long: O-methyltransferase rstn1 (225 aa).

Glutamine 97 and histidine 142 together coordinate S-adenosyl-L-methionine.

It belongs to the methyltransferase superfamily.

The enzyme catalyses desmethylrestrictinol + S-adenosyl-L-methionine = restrictinol + S-adenosyl-L-homocysteine + H(+). The protein operates within antifungal biosynthesis. Its function is as follows. O-methyltransferase; part of the gene cluster that mediates the biosynthesis of the tetrahydropyranyl antifungal agent restricticin that acts as an inhibitor of CYP51 and blocks the ergosterol biosynthesis. Within the pathway, rstn1 uses S-adenosylmethionine to methylate position C4 of desmethylrestrictinol to produce restrictinol. The highly reducing polyketide synthase rstn3, the short chain dehydrogenase rstn4, the cyclase rstn5, the FAD-dependent monooxygenase rstn6 and the enoylreductase rstn7 are required to generate the first stable intermediate desmethylrestrictinol. Rstn3 with rstn7 biosynthesize the first polyketide chain intermediate that is reduced by rstn4, followed by epoxidation by rstn6 before 6-endo cyclization via epoxide opening by rstn5 leads to desmethylrestrictinol. The methyltransferase rstn1 then catalyzes the C4 O-methylation of desmethylrestrictinol to produce restrictinol, and the nonribosomal peptide synthetase rstn8 catalyzes the C3 esterification of restrictinol with glycine that leads to restricticin. The sequence is that of O-methyltransferase rstn1 from Aspergillus nomiae NRRL (strain ATCC 15546 / NRRL 13137 / CBS 260.88 / M93).